Here is a 185-residue protein sequence, read N- to C-terminus: Ribonuclease HII (185 aa).

One can recognise an RNase H type-2 domain in the interval 1 to 185 (MIILGIDEAG…KSYKPIQLLL (185 aa)). A divalent metal cation-binding residues include D7, E8, and D99.

The protein belongs to the RNase HII family. Mn(2+) is required as a cofactor. Mg(2+) serves as cofactor.

The protein localises to the cytoplasm. It catalyses the reaction Endonucleolytic cleavage to 5'-phosphomonoester.. Functionally, endonuclease that specifically degrades the RNA of RNA-DNA hybrids. The chain is Ribonuclease HII from Francisella philomiragia subsp. philomiragia (strain ATCC 25017 / CCUG 19701 / FSC 153 / O#319-036).